A 211-amino-acid chain; its full sequence is Adenylate kinase (211 aa).

10 to 15 (GSGKGT) is a binding site for ATP. An NMP region spans residues 30-59 (STGDLFRENILNSTTLGKEIKKIVEKGELV). Residues Thr-31, Arg-36, 57 to 59 (ELV), 85 to 88 (GFPR), and Gln-92 contribute to the AMP site. The LID stretch occupies residues 121-158 (GRRICKSCNNIFNIYTLATKKNGICDVCKGDLYQREDD). Arg-122 contacts ATP. Cys-125 and Cys-128 together coordinate Zn(2+). 131-132 (IF) contacts ATP. Residues Cys-145 and Cys-148 each coordinate Zn(2+). The AMP site is built by Arg-155 and Arg-166. Val-194 provides a ligand contact to ATP.

This sequence belongs to the adenylate kinase family. As to quaternary structure, monomer.

The protein resides in the cytoplasm. It carries out the reaction AMP + ATP = 2 ADP. It participates in purine metabolism; AMP biosynthesis via salvage pathway; AMP from ADP: step 1/1. Catalyzes the reversible transfer of the terminal phosphate group between ATP and AMP. Plays an important role in cellular energy homeostasis and in adenine nucleotide metabolism. This Borrelia garinii subsp. bavariensis (strain ATCC BAA-2496 / DSM 23469 / PBi) (Borreliella bavariensis) protein is Adenylate kinase.